Consider the following 153-residue polypeptide: UPF0735 ACT domain-containing protein FN1487 (153 aa).

Residues 76–152 (SLHLSLKDRV…GIADIRITGS (77 aa)) form the ACT domain.

It belongs to the UPF0735 family.

In Fusobacterium nucleatum subsp. nucleatum (strain ATCC 25586 / DSM 15643 / BCRC 10681 / CIP 101130 / JCM 8532 / KCTC 2640 / LMG 13131 / VPI 4355), this protein is UPF0735 ACT domain-containing protein FN1487.